A 245-amino-acid polypeptide reads, in one-letter code: Tetraspanin-6 (245 aa).

Residues 1–19 (MASPSRRLQTKPVITCFKS) are Cytoplasmic-facing. A helical membrane pass occupies residues 20-40 (VLLIYTFIFWITGVILLAVGI). The Extracellular portion of the chain corresponds to 41–59 (WGKVSLENYFSLLNEKATN). The helical transmembrane segment at 60–80 (VPFVLIGTGTVIILLGTFGCF) threads the bilayer. Residues 81-93 (ATCRASAWMLKLY) lie on the Cytoplasmic side of the membrane. The chain crosses the membrane as a helical span at residues 94–114 (AMFLTLIFLVELVAAIIGFVF). Over 115–208 (RHEIKNSLKN…IMVMTIIESE (94 aa)) the chain is Extracellular. A glycan (N-linked (GlcNAc...) asparagine) is linked at asparagine 134. A helical transmembrane segment spans residues 209–229 (MGVVAGISFGVACFQLIGIFL). At 230–245 (AYCLSRAITNNQYEIV) the chain is on the cytoplasmic side.

It belongs to the tetraspanin (TM4SF) family.

It is found in the membrane. The polypeptide is Tetraspanin-6 (TSPAN6) (Bos taurus (Bovine)).